Here is a 500-residue protein sequence, read N- to C-terminus: Centrosomal protein of 57 kDa (500 aa).

Low complexity predominate over residues 1–16 (MAAASVSAASDSQFSS). Residues 1 to 59 (MAAASVSAASDSQFSSVLAEPSRSNGNMVRHSSSPYVLYPPDKPFLNSDLRRSPNKPTF) form a disordered region. Residues 22-35 (SRSNGNMVRHSSSP) are compositionally biased toward polar residues. S53 is subject to Phosphoserine. The segment at 58-239 (TFAYPESNSR…RAAELQSGLE (182 aa)) is centrosome localization domain (CLD). Residues 63-242 (ESNSRAIFSA…ELQSGLEANR (180 aa)) are a coiled coil. Disordered regions lie at residues 256–275 (STRK…GSRT) and 432–478 (QKKE…RKNL). The mediates interaction with microtubules stretch occupies residues 278–491 (GAQPHYRLCL…KDMQTIQNSL (214 aa)). Residues 389 to 449 (TVELKDNLEC…KKTLDEEGNS (61 aa)) are a coiled coil. Basic and acidic residues-rich tracts occupy residues 432 to 444 (QKKE…KTLD) and 461 to 475 (SKKD…EKSR).

The protein belongs to the translokin family. In terms of assembly, interacts with FGF2 and RAP80. Does not interact with FGF1 or FGF2 isoform 24 kDa. Homodimer and homooligomer. Interacts with microtubules. As to expression, ubiquitous (at protein level). Expressed in testis, predominantly in round spermatids. Low expression is detected in other tissues.

The protein localises to the nucleus. The protein resides in the cytoplasm. Its subcellular location is the cytoskeleton. It is found in the microtubule organizing center. It localises to the centrosome. Centrosomal protein which may be required for microtubule attachment to centrosomes. May act by forming ring-like structures around microtubules. Mediates nuclear translocation and mitogenic activity of the internalized growth factor FGF2. The protein is Centrosomal protein of 57 kDa (Cep57) of Mus musculus (Mouse).